Consider the following 248-residue polypeptide: 3-deoxy-manno-octulosonate cytidylyltransferase (248 aa).

It belongs to the KdsB family.

The protein resides in the cytoplasm. It catalyses the reaction 3-deoxy-alpha-D-manno-oct-2-ulosonate + CTP = CMP-3-deoxy-beta-D-manno-octulosonate + diphosphate. Its pathway is nucleotide-sugar biosynthesis; CMP-3-deoxy-D-manno-octulosonate biosynthesis; CMP-3-deoxy-D-manno-octulosonate from 3-deoxy-D-manno-octulosonate and CTP: step 1/1. It functions in the pathway bacterial outer membrane biogenesis; lipopolysaccharide biosynthesis. Functionally, activates KDO (a required 8-carbon sugar) for incorporation into bacterial lipopolysaccharide in Gram-negative bacteria. The polypeptide is 3-deoxy-manno-octulosonate cytidylyltransferase (Chlorobaculum parvum (strain DSM 263 / NCIMB 8327) (Chlorobium vibrioforme subsp. thiosulfatophilum)).